The sequence spans 41 residues: Photosystem I reaction center subunit VIII (41 aa).

A helical membrane pass occupies residues 12-32 (WIMIPVTCWLFPVVVMGLLFI).

Belongs to the PsaI family.

Its subcellular location is the cellular thylakoid membrane. In terms of biological role, may help in the organization of the PsaL subunit. In Cyanothece sp. (strain PCC 7425 / ATCC 29141), this protein is Photosystem I reaction center subunit VIII.